A 430-amino-acid polypeptide reads, in one-letter code: Probable sugar isomerase R00627 (430 aa).

Positions 257, 289, and 291 each coordinate Mn(2+).

Belongs to the rhamnose isomerase family. It depends on Mn(2+) as a cofactor.

The polypeptide is Probable sugar isomerase R00627 (Rhizobium meliloti (strain 1021) (Ensifer meliloti)).